Consider the following 755-residue polypeptide: Proprotein convertase subtilisin/kexin type 4 (755 aa).

The signal sequence occupies residues 1 to 25; it reads MRPAPIALWLRLVLALALVRPRAVG. Positions 26-113 are excised as a propeptide; it reads WAPVRAPIYV…QQTLQRRVKR (88 aa). The region spanning 126–440 is the Peptidase S8 domain; that stretch reads QWYMNSEAQP…YGLLDAGLLV (315 aa). Catalysis depends on charge relay system residues D158, H199, and S373. Residues 449-581 form the P/Homo B domain; it reads TQPQRKCAVR…TLLLYGTAED (133 aa). N-linked (GlcNAc...) asparagine glycans are attached at residues N475 and N629. A helical membrane pass occupies residues 709-729; sequence AMVLSLLAVTLGGPVLCGMSM.

It belongs to the peptidase S8 family. Furin subfamily. The proPCSK4 form interacts with HSPA5; the interaction takes place at the endoplasmic reticulum. Post-translationally, N-glycosylated. Synthesized in the endoplasmic reticulum as a zymogen, is matured by autocatalytic cleavage between the prodomain and the catalytic domain. As to expression, placenta.

Its subcellular location is the membrane. It is found in the cytoplasmic vesicle. The protein localises to the secretory vesicle. The protein resides in the acrosome membrane. Proprotein convertase involved in the processing of hormone and other protein precursors at sites comprised of pairs of basic amino acid residues. In males, important for ADAM2 processing as well as other acrosomal proteins with roles in fertilization and critical for normal fertilization events such as sperm capacitation, acrosome reaction and binding of sperm to zona pellucida. Also plays a role in female fertility, involved in the regulation of trophoblast migration and placental development, may be through the proteolytical processing and activation of proteins such as IGF2. May also participate in folliculogenesis in the ovaries. This is Proprotein convertase subtilisin/kexin type 4 from Homo sapiens (Human).